We begin with the raw amino-acid sequence, 170 residues long: ATP synthase subunit b (170 aa).

The chain crosses the membrane as a helical span at residues 22–41 (ILNWAVVVFGLYKFLPGFLG). Residues 72 to 98 (AKKDLSSAEEKASQIKADSLKRSESIR) form a disordered region.

This sequence belongs to the ATPase B chain family. As to quaternary structure, F-type ATPases have 2 components, F(1) - the catalytic core - and F(0) - the membrane proton channel. F(1) has five subunits: alpha(3), beta(3), gamma(1), delta(1), epsilon(1). F(0) has four main subunits: a(1), b(1), b'(1) and c(10-14). The alpha and beta chains form an alternating ring which encloses part of the gamma chain. F(1) is attached to F(0) by a central stalk formed by the gamma and epsilon chains, while a peripheral stalk is formed by the delta, b and b' chains.

The protein localises to the cellular thylakoid membrane. Functionally, f(1)F(0) ATP synthase produces ATP from ADP in the presence of a proton or sodium gradient. F-type ATPases consist of two structural domains, F(1) containing the extramembraneous catalytic core and F(0) containing the membrane proton channel, linked together by a central stalk and a peripheral stalk. During catalysis, ATP synthesis in the catalytic domain of F(1) is coupled via a rotary mechanism of the central stalk subunits to proton translocation. Component of the F(0) channel, it forms part of the peripheral stalk, linking F(1) to F(0). In Prochlorococcus marinus (strain MIT 9301), this protein is ATP synthase subunit b.